The sequence spans 259 residues: Thiazole synthase (259 aa).

The Schiff-base intermediate with DXP role is filled by lysine 99. 1-deoxy-D-xylulose 5-phosphate contacts are provided by residues glycine 161, 187–188 (AG), and 209–219 (NSAIACAQNPI).

The protein belongs to the ThiG family. In terms of assembly, homotetramer. Forms heterodimers with either ThiH or ThiS.

The protein localises to the cytoplasm. It carries out the reaction [ThiS sulfur-carrier protein]-C-terminal-Gly-aminoethanethioate + 2-iminoacetate + 1-deoxy-D-xylulose 5-phosphate = [ThiS sulfur-carrier protein]-C-terminal Gly-Gly + 2-[(2R,5Z)-2-carboxy-4-methylthiazol-5(2H)-ylidene]ethyl phosphate + 2 H2O + H(+). The protein operates within cofactor biosynthesis; thiamine diphosphate biosynthesis. Functionally, catalyzes the rearrangement of 1-deoxy-D-xylulose 5-phosphate (DXP) to produce the thiazole phosphate moiety of thiamine. Sulfur is provided by the thiocarboxylate moiety of the carrier protein ThiS. In vitro, sulfur can be provided by H(2)S. This is Thiazole synthase from Aliarcobacter butzleri (strain RM4018) (Arcobacter butzleri).